Reading from the N-terminus, the 510-residue chain is Probable mannosyl-oligosaccharide alpha-1,2-mannosidase 1B (510 aa).

The N-terminal stretch at 1-21 is a signal peptide; it reads MHFSSLSLPLTALSLVTPSLA. N-linked (GlcNAc...) asparagine glycans are attached at residues Asn35, Asn95, Asn182, and Asn249. An intrachain disulfide couples Cys332 to Cys361. Asn366 is a glycosylation site (N-linked (GlcNAc...) asparagine). The Proton donor role is filled by Glu375. Thr501 lines the Ca(2+) pocket.

It belongs to the glycosyl hydrolase 47 family. Monomer. Ca(2+) serves as cofactor. Mg(2+) is required as a cofactor.

It is found in the cytoplasmic vesicle lumen. The catalysed reaction is N(4)-(alpha-D-Man-(1-&gt;2)-alpha-D-Man-(1-&gt;2)-alpha-D-Man-(1-&gt;3)-[alpha-D-Man-(1-&gt;2)-alpha-D-Man-(1-&gt;3)-[alpha-D-Man-(1-&gt;2)-alpha-D-Man-(1-&gt;6)]-alpha-D-Man-(1-&gt;6)]-beta-D-Man-(1-&gt;4)-beta-D-GlcNAc-(1-&gt;4)-beta-D-GlcNAc)-L-asparaginyl-[protein] (N-glucan mannose isomer 9A1,2,3B1,2,3) + 4 H2O = N(4)-(alpha-D-Man-(1-&gt;3)-[alpha-D-Man-(1-&gt;3)-[alpha-D-Man-(1-&gt;6)]-alpha-D-Man-(1-&gt;6)]-beta-D-Man-(1-&gt;4)-beta-D-GlcNAc-(1-&gt;4)-beta-D-GlcNAc)-L-asparaginyl-[protein] (N-glucan mannose isomer 5A1,2) + 4 beta-D-mannose. The enzyme catalyses N(4)-(alpha-D-Man-(1-&gt;2)-alpha-D-Man-(1-&gt;2)-alpha-D-Man-(1-&gt;3)-[alpha-D-Man-(1-&gt;3)-[alpha-D-Man-(1-&gt;2)-alpha-D-Man-(1-&gt;6)]-alpha-D-Man-(1-&gt;6)]-beta-D-Man-(1-&gt;4)-beta-D-GlcNAc-(1-&gt;4)-beta-D-GlcNAc)-L-asparaginyl-[protein] (N-glucan mannose isomer 8A1,2,3B1,3) + 3 H2O = N(4)-(alpha-D-Man-(1-&gt;3)-[alpha-D-Man-(1-&gt;3)-[alpha-D-Man-(1-&gt;6)]-alpha-D-Man-(1-&gt;6)]-beta-D-Man-(1-&gt;4)-beta-D-GlcNAc-(1-&gt;4)-beta-D-GlcNAc)-L-asparaginyl-[protein] (N-glucan mannose isomer 5A1,2) + 3 beta-D-mannose. Its pathway is protein modification; protein glycosylation. Involved in the maturation of Asn-linked oligosaccharides. Progressively trims alpha-1,2-linked mannose residues from Man(9)GlcNAc(2) to produce Man(5)GlcNAc(2). The protein is Probable mannosyl-oligosaccharide alpha-1,2-mannosidase 1B (mns1B) of Aspergillus flavus (strain ATCC 200026 / FGSC A1120 / IAM 13836 / NRRL 3357 / JCM 12722 / SRRC 167).